We begin with the raw amino-acid sequence, 577 residues long: Proline--tRNA ligase (577 aa).

It belongs to the class-II aminoacyl-tRNA synthetase family. ProS type 1 subfamily. In terms of assembly, homodimer.

It localises to the cytoplasm. The enzyme catalyses tRNA(Pro) + L-proline + ATP = L-prolyl-tRNA(Pro) + AMP + diphosphate. In terms of biological role, catalyzes the attachment of proline to tRNA(Pro) in a two-step reaction: proline is first activated by ATP to form Pro-AMP and then transferred to the acceptor end of tRNA(Pro). As ProRS can inadvertently accommodate and process non-cognate amino acids such as alanine and cysteine, to avoid such errors it has two additional distinct editing activities against alanine. One activity is designated as 'pretransfer' editing and involves the tRNA(Pro)-independent hydrolysis of activated Ala-AMP. The other activity is designated 'posttransfer' editing and involves deacylation of mischarged Ala-tRNA(Pro). The misacylated Cys-tRNA(Pro) is not edited by ProRS. The protein is Proline--tRNA ligase of Helicobacter pylori (strain HPAG1).